We begin with the raw amino-acid sequence, 586 residues long: Dolichyl-diphosphooligosaccharide--protein glycosyltransferase subunit 1 (586 aa).

The N-terminal stretch at 1-15 (MRLLFAIALLGAVFA) is a signal peptide. The Lumenal portion of the chain corresponds to 16 to 421 (EDAWKAANVD…EFEFVDMLRE (406 aa)). Residues 422-442 (PLLASAFFFSLFFVIIVYSRF) traverse the membrane as a helical segment. At 443 to 586 (DFTISSDPAK…NRADSVLASI (144 aa)) the chain is on the cytoplasmic side.

This sequence belongs to the OST1 family. Component of the oligosaccharyltransferase (OST) complex.

It localises to the endoplasmic reticulum membrane. It is found in the cytoplasmic granule. Its pathway is protein modification; protein glycosylation. Subunit of the oligosaccharyl transferase (OST) complex that catalyzes the initial transfer of a defined glycan (Glc(3)Man(9)GlcNAc(2) in eukaryotes) from the lipid carrier dolichol-pyrophosphate to an asparagine residue within an Asn-X-Ser/Thr consensus motif in nascent polypeptide chains, the first step in protein N-glycosylation. N-glycosylation occurs cotranslationally and the complex associates with the Sec61 complex at the channel-forming translocon complex that mediates protein translocation across the endoplasmic reticulum (ER). All subunits are required for a maximal enzyme activity. The chain is Dolichyl-diphosphooligosaccharide--protein glycosyltransferase subunit 1 from Caenorhabditis elegans.